The chain runs to 179 residues: Ribosome maturation factor RimP (179 aa).

It belongs to the RimP family.

Its subcellular location is the cytoplasm. Its function is as follows. Required for maturation of 30S ribosomal subunits. In Prosthecochloris aestuarii (strain DSM 271 / SK 413), this protein is Ribosome maturation factor RimP.